A 93-amino-acid polypeptide reads, in one-letter code: Putative defensin-like protein 190 (93 aa).

Residues 1-30 form the signal peptide; that stretch reads MKMAKAAATNDFGFITCLVIFLVLAGISNG. Disulfide bonds link Cys-39/Cys-89, Cys-55/Cys-75, Cys-60/Cys-84, and Cys-64/Cys-86.

Belongs to the DEFL family.

The protein resides in the secreted. This is Putative defensin-like protein 190 from Arabidopsis thaliana (Mouse-ear cress).